The chain runs to 530 residues: Estrogen receptor beta (530 aa).

Residues 1–148 (MEIKNSPSSL…SPNAKRDAHF (148 aa)) form a modulating region. Residue Ser-61 is modified to Phosphoserine; alternate. O-linked (GlcNAc) serine; alternate glycosylation occurs at Ser-61. Ser-87 and Ser-105 each carry phosphoserine; by MAPK. NR C4-type zinc fingers lie at residues 149 to 169 (CPVC…CEGC) and 185 to 209 (CPAT…LRKC). A DNA-binding region (nuclear receptor) is located at residues 149–214 (CPVCSDYASG…RLRKCYEVGM (66 aa)). The NR LBD domain maps to 264-498 (SPEQLVLTLL…DLLLEMLNAH (235 aa)). A compositionally biased stretch (low complexity) spans 506-515 (SISGSECSST). The segment at 506-530 (SISGSECSSTEDSKNKESSQNLQSQ) is disordered.

It belongs to the nuclear hormone receptor family. NR3 subfamily. In terms of assembly, binds DNA as a homodimer. Can form a heterodimer with ESR1. Interacts with NCOA1, NCOA3, NCOA5 and NCOA6 coactivators, leading to a strong increase of transcription of target genes. Interacts with UBE1C and AKAP13. Interacts with DNTTIP2. Interacts with CCDC62 in the presence of estradiol/E2; this interaction seems to enhance the transcription of target genes. Interacts with PRMT2. Interacts with CCAR2 (via N-terminus) in a ligand-independent manner. Interacts with DNAAF4. Interacts with RBM39, in the presence of estradiol (E2). Interacts with STUB1/CHIP. Post-translationally, phosphorylation at Ser-87 and Ser-105 recruits NCOA1. As to expression, expressed in the CA1 region of the hippocampus, expression decreases with age (at protein level). Expressed in prostate, ovary, lung, liver, kidney, fat, bone, brain, uterus and testis.

The protein resides in the nucleus. Functionally, nuclear hormone receptor. Binds estrogens with an affinity similar to that of ESR1/ER-alpha, and activates expression of reporter genes containing estrogen response elements (ERE) in an estrogen-dependent manner. Lacks ligand binding affinity and suppresses ESR1/ER-alpha and ESR2 isoform 1/ER-beta1 mediated transcriptional activation and may act as a dominant negative regulator of estrogen action. Its function is as follows. Unable to bind DNA and activate transcription due to the truncation of the DNA binding domain. This chain is Estrogen receptor beta (Esr2), found in Rattus norvegicus (Rat).